The sequence spans 145 residues: Small ribosomal subunit protein eS19 (145 aa).

Residue Lys-23 is modified to N6-acetyllysine. At Arg-67 the chain carries Omega-N-methylarginine. N6-acetyllysine is present on residues Lys-111 and Lys-115. Position 143 is an N6-succinyllysine (Lys-143).

This sequence belongs to the eukaryotic ribosomal protein eS19 family. In terms of assembly, component of the small ribosomal subunit. Part of the small subunit (SSU) processome, composed of more than 70 proteins and the RNA chaperone small nucleolar RNA (snoRNA) U3. Interacts with RPS19BP1; the interaction is direct and mediates the integration of RPS19 in state post-A1. Interacts with RPS19BP1.

It localises to the cytoplasm. The protein localises to the nucleus. Its subcellular location is the nucleolus. Its function is as follows. Component of the small ribosomal subunit. The ribosome is a large ribonucleoprotein complex responsible for the synthesis of proteins in the cell. Required for pre-rRNA processing and maturation of 40S ribosomal subunits. Part of the small subunit (SSU) processome, first precursor of the small eukaryotic ribosomal subunit. During the assembly of the SSU processome in the nucleolus, many ribosome biogenesis factors, an RNA chaperone and ribosomal proteins associate with the nascent pre-rRNA and work in concert to generate RNA folding, modifications, rearrangements and cleavage as well as targeted degradation of pre-ribosomal RNA by the RNA exosome. The chain is Small ribosomal subunit protein eS19 (RPS19) from Oryctolagus cuniculus (Rabbit).